Consider the following 189-residue polypeptide: Chitin synthase 1 (189 aa).

Belongs to the chitin synthase family. Class I subfamily.

The protein localises to the cell membrane. It catalyses the reaction [(1-&gt;4)-N-acetyl-beta-D-glucosaminyl](n) + UDP-N-acetyl-alpha-D-glucosamine = [(1-&gt;4)-N-acetyl-beta-D-glucosaminyl](n+1) + UDP + H(+). In terms of biological role, polymerizes chitin, a structural polymer of the cell wall and septum, by transferring the sugar moiety of UDP-GlcNAc to the non-reducing end of the growing chitin polymer. This Aspergillus niger protein is Chitin synthase 1 (chs1).